The following is a 118-amino-acid chain: UPF0102 protein Bcav_2532 (118 aa).

Belongs to the UPF0102 family.

The sequence is that of UPF0102 protein Bcav_2532 from Beutenbergia cavernae (strain ATCC BAA-8 / DSM 12333 / CCUG 43141 / JCM 11478 / NBRC 16432 / NCIMB 13614 / HKI 0122).